A 1042-amino-acid polypeptide reads, in one-letter code: MVDALNLGKILRVHATVYVAAEPVPLFWPMRTFIYNNPLHGLEGLPFTEAVQAARGLFHARVYLPRTTYQHYLREGKGDVRMLDAITAQFAQTAPSIDGIDWQRWLSAVRKAPTDASPYVPHASAEDVAAVLAGQAIPNGSAIAAGLDAAMLADLPPWRPLTECIDSLWGTNLAAELDELVVKSCLDFFDEDQSSWRMPGRKQGFYAAWADVARRNGRMFLRGLAIKRILDQAPRADAAIVHVMQSLGIAEEHWQAYFSRELLRLHGWAGFIRWRSGAEHYHWGRKHPADLVDFLAVRLVFALALIEESARHRKTPANRPAFDAFLREQRDCALLRYALHAGELLPGWAQRIDDALERSSGNRIARLAEDYAKEWRRVHAQRQGQILQKIAMEAGTPVQTLAALGAQGAAEVLEVLQRFAVQEGSMWLRALEARAIDHLLSQIVTPDEPAVPKRAFAQALFCIDVRSERLRRNLENVGDFLTFGIAGFFGVPVGFLGYGKGSETHLCPAIVTPKNLVLEISAAIDFDEEDFVSTLGHVLHDLKSSVISPFVTVEAIGALFGFDLIGKTMAPLAYHRWRSRLDAPHPFTHLLLDKLSREQADSIVRALQRAMIVNALRIELGIERERVNDDMIRELRETALGHCSGTTILVREFGLSLEREARFIEQVREVYRVNSSYANYQMLRLGRIGFSLDEQVNYVWTALTSIGLTRNFSRFVLLIGHGSHSENNPYESALDCGACGGSNGLVSARVLAQMANKAEVRAKLRTIGVDIPADTWFVPGLHTTTTDTVELYNLDFLPPRLLVYLERLRNGLYAASRLSAAERVPTLLPQAKTLKPAQAHRIVRVMSHDWSQVRPEWGLSGNLYFVVGRRGLTQKANLHGRSFLQSYDWQLDPKGRLLENILAGPVVVGQWINMEHYFSTVDNTHFGSGSKVYHNVAGRFGVMTGNLSDLRTGLPAQTVMRHGQPYHEPLRLIVMIEAPLDFARRAIEAVAKVKSLVQGQWVRTIILDPTQDMQAYVFDDGEWQVHFISASQSTYTEEVVTA.

Residues Cys462, Asp464, His721, and Cys736 each contribute to the Zn(2+) site.

This sequence belongs to the inorganic carbon transporter (TC 9.A.2) DabA family. In terms of assembly, forms a complex with DabB. Requires Zn(2+) as cofactor.

Its subcellular location is the cell inner membrane. In terms of biological role, part of an energy-coupled inorganic carbon pump. This chain is Probable inorganic carbon transporter subunit DabA, found in Nitrosomonas eutropha (strain DSM 101675 / C91 / Nm57).